The following is a 278-amino-acid chain: Elongation factor Ts (278 aa).

The segment at 82–85 is involved in Mg(2+) ion dislocation from EF-Tu; sequence TEPV.

Belongs to the EF-Ts family.

The protein resides in the cytoplasm. Its function is as follows. Associates with the EF-Tu.GDP complex and induces the exchange of GDP to GTP. It remains bound to the aminoacyl-tRNA.EF-Tu.GTP complex up to the GTP hydrolysis stage on the ribosome. In Cytophaga hutchinsonii (strain ATCC 33406 / DSM 1761 / CIP 103989 / NBRC 15051 / NCIMB 9469 / D465), this protein is Elongation factor Ts.